A 259-amino-acid polypeptide reads, in one-letter code: MASQLRLRSALALVTGAGSGIGRAISVRLAAEGAAVAACDLDGAAAQDTVRLLGNPGSEDREPRGKHAAFQADVSEGPAAKRLLEQVQACFFRPPSVVVSCAGITRDEFLLHMSEEDWDRVIAVNLKGTFLVTQAAAQALVSSGGRGSIINISSIVGKVGNIGQTNYASSKAGVIGLTQTAARELGRHGIRCNSVLPGFIATPMTQKMPEKVKDKVTAMIPLGHMGDPEDVADVVAFLASEDSGYITGASVEVSGGLFM.

NAD(+)-binding positions include 13 to 21 (LVTGAGSGI) and 40 to 41 (DL). S58 carries the post-translational modification Phosphoserine. K66 carries the N6-acetyllysine modification. Residue 72 to 74 (ADV) participates in NAD(+) binding. S154 is a binding site for substrate. An N6-succinyllysine modification is found at K158. Residue Y167 is the Proton acceptor of the active site. NAD(+) contacts are provided by residues 167–171 (YASSK) and 200–202 (IAT). The residue at position 171 (K171) is an N6-succinyllysine.

Belongs to the short-chain dehydrogenases/reductases (SDR) family. Heterotetramer with CBR4; contains two molecules of HSD17B8 and CBR4. In terms of tissue distribution, expressed in ovary at protein level.

It is found in the mitochondrion matrix. The catalysed reaction is a (3R)-3-hydroxyacyl-CoA + NAD(+) = a 3-oxoacyl-CoA + NADH + H(+). It carries out the reaction 17beta-estradiol + NAD(+) = estrone + NADH + H(+). It catalyses the reaction testosterone + NAD(+) = androst-4-ene-3,17-dione + NADH + H(+). The enzyme catalyses 17beta-hydroxy-5alpha-androstan-3-one + NAD(+) = 5alpha-androstan-3,17-dione + NADH + H(+). It functions in the pathway steroid biosynthesis; estrogen biosynthesis. The protein operates within lipid metabolism; fatty acid biosynthesis. Its pathway is lipid metabolism; mitochondrial fatty acid beta-oxidation. Its function is as follows. Required for the solubility and assembly of the heterotetramer 3-ketoacyl-[acyl carrier protein] (ACP) reductase functional complex (KAR or KAR1) that forms part of the mitochondrial fatty acid synthase (mtFAS). Alpha-subunit of the KAR complex that acts as scaffold protein required for the stability of carbonyl reductase type-4 (CBR4, beta-subunit of the KAR complex) and for its 3-ketoacyl-ACP reductase activity, thereby participating in mitochondrial fatty acid biosynthesis. Catalyzes the NAD-dependent conversion of (3R)-3-hydroxyacyl-CoA into 3-ketoacyl-CoA (3-oxoacyl-CoA) with no chain length preference; this enzymatic activity is not needed for the KAR function. Prefers (3R)-3-hydroxyacyl-CoA over (3S)-3-hydroxyacyl-CoA and displays enzymatic activity only in the presence of NAD(+). Cooperates with enoyl-CoA hydratase 1 in mitochondria, together they constitute an alternative route to the auxiliary enzyme pathways for the breakdown of Z-PUFA (cis polyunsaturated fatty acid) enoyl-esters. NAD-dependent 17-beta-hydroxysteroid dehydrogenase with highest activity towards estradiol (17beta-estradiol or E2). Has very low activity towards testosterone and dihydrotestosterone (17beta-hydroxy-5alpha-androstan-3-one). Primarily an oxidative enzyme, it can switch to a reductive mode determined in the appropriate physiologic milieu and catalyze the reduction of estrone (E1) to form biologically active 17beta-estradiol. This is (3R)-3-hydroxyacyl-CoA dehydrogenase (Hsd17b8) from Rattus norvegicus (Rat).